A 400-amino-acid chain; its full sequence is MPAIKIKDNIFSVGVLNPSLRIFDIIMKTEYGTSYNAYLIKGKKNVLIDTVHGRFFDEYLENIKSVIDPSSIDYVIMNHCEPDHSGSLARLYEVAPQIKVIASNAGKIYLKNITNKETLDVKAVKTNDTLDIGNGKVLKFAIAPFLHWPDSMFTILEEDKIAFTCDFLGCHFCEPRMFDTKITYMPKYEKSFKEYYDAIFSPFKPYVVKGLDILDALDLDFIATSHGPILTREGLLAASKQKYRDLSSEIQSTTKYIPIFYCSAYGNTEILANEIASGIKSVLNDANIEMLDIINYDYSDLKEKINICDAFMLGTPTINKDALFPIWELIGGIDAVNCKNKPASAFGSFGWSGEAIPFVISRLKELKLKVFQDGFTCLFVPSEDDIKKAFKFGEDFAKSI.

Residues 32–216 are zinc metallo-hydrolase; sequence GTSYNAYLIK…VVKGLDILDA (185 aa). Fe cation-binding residues include histidine 79, glutamate 81, aspartate 83, histidine 147, aspartate 166, and histidine 226. The Flavodoxin-like domain maps to 257 to 397; it reads IPIFYCSAYG…KAFKFGEDFA (141 aa). FMN is bound by residues 263–267 and 345–372; these read SAYGN and AFGSFGWSGEAIPFVISRLKELKLKVFQ.

In the N-terminal section; belongs to the zinc metallo-hydrolase group 3 family. In terms of assembly, homotetramer. Requires FMN as cofactor. Fe cation is required as a cofactor.

The catalysed reaction is 2 NADH + O2 + 2 H(+) = 2 NAD(+) + 2 H2O. Functionally, catalyzes the four-electron reduction of molecular oxygen to water. In fact, functions as the terminal component of an NADH oxidase (NADH:O(2) oxidoreductase) when using NADH:rubredoxin oxidoreductase (NROR) and rubredoxin (Rd) as electron transport intermediaries between NADH and FDP. Is thus able to reductively scavenge intracellular dioxygen and is part of an oxidative stress defense system in C.acetobutylicum, an obligate anaerobic bacterium. Can also serve as the terminal component of an NADH:nitric oxide oxidoreductase (NOR) with a catalytic efficiency comparable to that of its NADH oxidase activity, and therefore might have an in vivo role in scavenging nitric oxide. The protein is Flavo-diiron protein FprA2 (fprA2) of Clostridium acetobutylicum (strain ATCC 824 / DSM 792 / JCM 1419 / IAM 19013 / LMG 5710 / NBRC 13948 / NRRL B-527 / VKM B-1787 / 2291 / W).